The sequence spans 276 residues: Rhamnulose-1-phosphate aldolase (276 aa).

Residue E117 is part of the active site. Zn(2+)-binding residues include H141, H143, and H212.

Belongs to the aldolase class II family. RhaD subfamily. Homotetramer. It depends on Zn(2+) as a cofactor.

It is found in the cytoplasm. It carries out the reaction L-rhamnulose 1-phosphate = (S)-lactaldehyde + dihydroxyacetone phosphate. It functions in the pathway carbohydrate degradation; L-rhamnose degradation; glycerone phosphate from L-rhamnose: step 3/3. Functionally, catalyzes the reversible cleavage of L-rhamnulose-1-phosphate to dihydroxyacetone phosphate (DHAP) and L-lactaldehyde. This Klebsiella pneumoniae (strain 342) protein is Rhamnulose-1-phosphate aldolase.